Here is an 811-residue protein sequence, read N- to C-terminus: Lysine-specific histone demethylase 1 homolog 3 (811 aa).

Residues 1-10 (MSDQPPPYTP) show a composition bias toward pro residues. Residues 1–79 (MSDQPPPYTP…PSAQPPPRAS (79 aa)) form a disordered region. Over residues 44–55 (NKRKRTGFRRKL) the composition is skewed to basic residues. A compositionally biased stretch (low complexity) spans 56–71 (PSGSPAAPVAVAASPS). Residues 88-189 (NREPTAEAVT…FGVAPAIKER (102 aa)) enclose the SWIRM domain. The FAD site is built by glutamate 227, arginine 229, arginine 235, and glutamate 609. Residues 790–811 (RNSSRTKTRPSKLKIGIPKSKS) form a disordered region.

The protein belongs to the flavin monoamine oxidase family. FAD is required as a cofactor.

In terms of biological role, probable histone demethylase. The chain is Lysine-specific histone demethylase 1 homolog 3 from Oryza sativa subsp. indica (Rice).